The following is a 426-amino-acid chain: Serine--tRNA ligase (426 aa).

Thr233 to Glu235 contributes to the L-serine binding site. ATP is bound at residue Arg264 to Glu266. Glu287 contacts L-serine. Glu351 to Ser354 is a binding site for ATP. Position 387 (Ser387) interacts with L-serine.

The protein belongs to the class-II aminoacyl-tRNA synthetase family. Type-1 seryl-tRNA synthetase subfamily. In terms of assembly, homodimer. The tRNA molecule binds across the dimer.

It localises to the cytoplasm. It catalyses the reaction tRNA(Ser) + L-serine + ATP = L-seryl-tRNA(Ser) + AMP + diphosphate + H(+). It carries out the reaction tRNA(Sec) + L-serine + ATP = L-seryl-tRNA(Sec) + AMP + diphosphate + H(+). Its pathway is aminoacyl-tRNA biosynthesis; selenocysteinyl-tRNA(Sec) biosynthesis; L-seryl-tRNA(Sec) from L-serine and tRNA(Sec): step 1/1. Its function is as follows. Catalyzes the attachment of serine to tRNA(Ser). Is also able to aminoacylate tRNA(Sec) with serine, to form the misacylated tRNA L-seryl-tRNA(Sec), which will be further converted into selenocysteinyl-tRNA(Sec). The sequence is that of Serine--tRNA ligase from Clostridium novyi (strain NT).